A 221-amino-acid chain; its full sequence is Hypoxanthine-guanine phosphoribosyltransferase (221 aa).

S2 is subject to N-acetylserine. GMP contacts are provided by residues K85, 110–118 (DEVDDTRTT), K159, and 188–194 (WYAYPWE). The active-site Proton acceptor is the D114.

It belongs to the purine/pyrimidine phosphoribosyltransferase family. As to quaternary structure, dimer. Mg(2+) serves as cofactor.

It localises to the cytoplasm. The protein resides in the nucleus. The catalysed reaction is IMP + diphosphate = hypoxanthine + 5-phospho-alpha-D-ribose 1-diphosphate. The enzyme catalyses GMP + diphosphate = guanine + 5-phospho-alpha-D-ribose 1-diphosphate. Its pathway is purine metabolism; IMP biosynthesis via salvage pathway; IMP from hypoxanthine: step 1/1. Its activity is regulated as follows. Subject to feedback inhibition by GMP. Its function is as follows. Converts guanine to guanosine monophosphate, and hypoxanthine to inosine monophosphate. Transfers the 5-phosphoribosyl group from 5-phosphoribosylpyrophosphate onto the purine. Plays a central role in the generation of purine nucleotides through the purine salvage pathway. This chain is Hypoxanthine-guanine phosphoribosyltransferase (HPT1), found in Saccharomyces cerevisiae (strain ATCC 204508 / S288c) (Baker's yeast).